We begin with the raw amino-acid sequence, 252 residues long: Probable transcriptional regulatory protein Kole_1935 (252 aa).

Belongs to the TACO1 family.

Its subcellular location is the cytoplasm. The sequence is that of Probable transcriptional regulatory protein Kole_1935 from Kosmotoga olearia (strain ATCC BAA-1733 / DSM 21960 / TBF 19.5.1).